We begin with the raw amino-acid sequence, 243 residues long: 2-O-methyltransferase NoeI (243 aa).

The protein belongs to the FkbM methyltransferase family.

The protein resides in the cytoplasm. Its function is as follows. Required for 2-O-methylation of the fucosyl group of Nod factors. This is 2-O-methyltransferase NoeI (noeI) from Sinorhizobium fredii (strain NBRC 101917 / NGR234).